The following is a 359-amino-acid chain: 4-galactosyl-N-acetylglucosaminide 3-alpha-L-fucosyltransferase 9 (359 aa).

Residues 1 to 11 (MTSTSKGILRP) lie on the Cytoplasmic side of the membrane. The helical; Signal-anchor for type II membrane protein transmembrane segment at 12–32 (FLIVCIILGCFMACLLIYIKP) threads the bilayer. Topologically, residues 33 to 359 (TNSWVFSPME…VGNLEKWFWN (327 aa)) are lumenal. N62 carries N-linked (GlcNAc...) asparagine glycosylation. The segment at 63-168 (ETTILVWVWP…RRDSDIQVPY (106 aa)) is acceptor-binding. Q75 serves as a coordination point for a beta-D-galactosyl-(1-&gt;4)-N-acetyl-beta-D-glucosaminyl derivative. Disulfide bonds link C82-C335, C91-C338, and C190-C238. Residue N101 is glycosylated (N-linked (GlcNAc...) asparagine). A beta-D-galactosyl-(1-&gt;4)-N-acetyl-beta-D-glucosaminyl derivative is bound at residue E137. The active-site Nucleophile is E137. E137 provides a ligand contact to GDP-beta-L-fucose. N-linked (GlcNAc...) asparagine glycosylation is present at N153. GDP-beta-L-fucose is bound by residues Y168, V192, S194, N195, R202, V226, Y241, N246, Y252, E255, and K256. Residues 169 to 326 (GFLTVSTNPF…NWRKDFTVNL (158 aa)) form a donor-binding region. The segment at 327 to 359 (PRFWESHACLACDHVKRHQEYKSVGNLEKWFWN) is acceptor-binding.

This sequence belongs to the glycosyltransferase 10 family. In terms of assembly, homodimer. N-glycosylated with complex-type N-glycans. In terms of tissue distribution, mainly detected in brain and kidney.

The protein localises to the golgi apparatus. It localises to the trans-Golgi network membrane. The protein resides in the golgi apparatus membrane. It carries out the reaction a beta-D-galactosyl-(1-&gt;4)-N-acetyl-beta-D-glucosaminyl derivative + GDP-beta-L-fucose = a beta-D-galactosyl-(1-&gt;4)-[alpha-L-fucosyl-(1-&gt;3)]-N-acetyl-beta-D-glucosaminyl derivative + GDP + H(+). It catalyses the reaction an alpha-Neu5Ac-(2-&gt;3)-beta-D-Gal-(1-&gt;4)-beta-D-GlcNAc-(1-&gt;3)-beta-D-Gal-(1-&gt;4)-beta-D-GlcNAc derivative + GDP-beta-L-fucose = an alpha-Neu5Ac-(2-&gt;3)-beta-D-Gal-(1-&gt;4)-beta-D-GlcNAc-(1-&gt;3)-beta-D-Gal-(1-&gt;4)-[alpha-L-Fuc-(1-&gt;3)]-beta-D-GlcNAc derivative + GDP + H(+). The catalysed reaction is alpha-N-glycoloylneuraminosyl-(2-&gt;3)-beta-D-galactosyl-(1-&gt;4)-N-acetyl-beta-D-glucosaminyl-(1-&gt;3)-beta-D-galactosyl-(1-&gt;4)-N-acetyl-beta-D-glucosaminyl-(1-&gt;3)-beta-D-galactosyl-(1-&gt;4)-beta-D-glucosyl-(1&lt;-&gt;1')-ceramide + GDP-beta-L-fucose = alpha-N-glycoloylneuraminosyl-(2-&gt;3)-beta-D-galactosyl-(1-&gt;4)-N-acetyl-beta-D-glucosaminyl-(1-&gt;3)-beta-D-galactosyl-(1-&gt;4)-[alpha-L-fucosyl-(1-&gt;3)]-N-acetyl-beta-D-glucosaminyl-(1-&gt;3)-beta-D-galactosyl-(1-&gt;4)-beta-D-glucosyl-(1&lt;-&gt;1')-ceramide + GDP + H(+). The enzyme catalyses alpha-D-galactosyl-(1-&gt;3)-beta-D-galactosyl-(1-&gt;4)-N-acetyl-beta-D-glucosaminyl-(1-&gt;3)-beta-D-galactosyl-(1-&gt;4)-beta-D-glucosyl-(1&lt;-&gt;1')-ceramide + GDP-beta-L-fucose = a neolactoside IV(3)-alpha-Gal,III(3)-alpha-Fuc-nLc4Cer + GDP + H(+). It carries out the reaction a neolactoside nLc4Cer + GDP-beta-L-fucose = a neolactoside III(3)-alpha-Fuc-nLc4Cer + GDP + H(+). It catalyses the reaction an N-acetyl-alpha-neuraminyl-(2-&gt;3)-beta-D-galactosyl-(1-&gt;4)-N-acetyl-beta-D-glucosaminyl derivative + GDP-beta-L-fucose = an alpha-Neu5Ac-(2-&gt;3)-beta-D-Gal-(1-&gt;4)-[alpha-L-Fuc-(1-&gt;3)]-beta-D-GlcNAc derivative + GDP + H(+). The catalysed reaction is beta-D-Gal-(1-&gt;4)-beta-D-GlcNAc-(1-&gt;3)-beta-D-Gal-(1-&gt;4)-D-Glc + GDP-beta-L-fucose = beta-D-Gal-(1-&gt;4)-[alpha-L-Fuc-(1-&gt;3)]-beta-D-GlcNAc-(1-&gt;3)-beta-D-Gal-(1-&gt;4)-D-Glc + GDP + H(+). The enzyme catalyses an alpha-L-Fuc-(1-&gt;2)-beta-D-Gal-(1-&gt;4)-beta-D-GlcNAc derivative + GDP-beta-L-fucose = an alpha-L-Fuc-(1-&gt;2)-beta-D-Gal-(1-&gt;4)-[alpha-L-Fuc-(1-&gt;3)]-beta-D-GlcNAc derivative + GDP + H(+). The protein operates within protein modification; protein glycosylation. Its pathway is glycolipid biosynthesis. Its activity is regulated as follows. Activated by Mn2+. Catalyzes alpha(1-&gt;3) linkage of fucosyl moiety transferred from GDP-beta-L-fucose to N-acetyl glucosamine (GlcNAc) within type 2 lactosamine (LacNAc, beta-D-Gal-(1-&gt;4)-beta-D-GlcNAc-) glycan attached to glycolipids and N- or O-linked glycoproteins. Fucosylates distal type 2 LacNAc and its fucosylated (H-type 2 LacNAc) and sialylated (sialyl-type 2 LacNAc) derivatives to form Lewis x (Lex) (CD15) and Lewis y (Ley) antigenic epitopes involved in cell adhesion and differentiation. Generates Lex epitopes in the brain, presumably playing a role in the maintenance of neuronal stemness and neurite outgrowth in progenitor neural cells. Fucosylates the internal type 2 LacNAc unit of the polylactosamine chain to form VIM-2 antigen that serves as recognition epitope for SELE. Can also modify milk oligosaccharides in particular type 2 tetrasaccharide LNnT. The sequence is that of 4-galactosyl-N-acetylglucosaminide 3-alpha-L-fucosyltransferase 9 from Mus musculus (Mouse).